The chain runs to 40 residues: MFKLLTLFKRNKITSAEEYYTQAIHICEQFDRSTQKYTSM.

The polypeptide is Putative gene 55 protein (55) (Bacillus phage SP01 (Bacteriophage SP01)).